The sequence spans 697 residues: Serine/threonine-protein kinase tousled-like 2 (697 aa).

2 disordered regions span residues 27 to 136 (KAPL…TAPV) and 289 to 315 (LAKR…NKTN). Residues 31 to 44 (NSESSNQSLCSLGS) show a composition bias toward polar residues. The segment covering 46–62 (SDKELEQTPEKKQNDQR) has biased composition (basic and acidic residues). A compositionally biased stretch (low complexity) spans 111–131 (SSPQHSLSNPLPLPSQQCSPP). Coiled coils occupy residues 264–293 (AFQN…AKRK) and 334–372 (FKLR…IHNE). The Protein kinase domain maps to 387–666 (YLLLHLLGRG…VQQLACDPYL (280 aa)). ATP contacts are provided by residues 393-401 (LGRGGFSEV) and lysine 416. The active-site Proton acceptor is the aspartate 517.

It belongs to the protein kinase superfamily. Ser/Thr protein kinase family. In terms of assembly, monomer. May form homodimers; homodimerization may enhance autophosphoylation and enzymatic activity. Heterodimer with TLK1. Mg(2+) serves as cofactor. Phosphorylated. Autophosphorylated; phosphorylation promotes the assembly of higher order oligomers and enzymatic activity.

Its subcellular location is the nucleus. The protein resides in the nucleoplasm. The protein localises to the cytoplasm. It localises to the perinuclear region. It is found in the cytoskeleton. It carries out the reaction L-seryl-[protein] + ATP = O-phospho-L-seryl-[protein] + ADP + H(+). The enzyme catalyses L-threonyl-[protein] + ATP = O-phospho-L-threonyl-[protein] + ADP + H(+). Functionally, serine/threonine-protein kinase involved in the process of chromatin assembly and probably also DNA replication, transcription, repair, and chromosome segregation. Negative regulator of amino acid starvation-induced autophagy. The chain is Serine/threonine-protein kinase tousled-like 2 from Xenopus tropicalis (Western clawed frog).